The chain runs to 182 residues: Coiled-coil domain-containing protein 32 (182 aa).

Positions 1–10 (MMIDDFETHA) are enriched in basic and acidic residues. 2 disordered regions span residues 1 to 61 (MMID…FSPW) and 153 to 182 (PTQN…SPEK). The span at 153–167 (PTQNSETPASSSQTD) shows a compositional bias: polar residues. The segment covering 172 to 182 (EEEEECPSPEK) has biased composition (acidic residues).

Associates with adaptor protein complex 2 (AP-2).

The protein localises to the membrane. The protein resides in the coated pit. In terms of biological role, regulates clathrin-mediated endocytsois of cargos such as transferrin probably through the association and modulation of adaptor protein complex 2 (AP-2). Has a role in ciliogenesis and is required for proper cephalic and left/right axis development. The sequence is that of Coiled-coil domain-containing protein 32 from Danio rerio (Zebrafish).